The chain runs to 420 residues: DNA primase small subunit (420 aa).

Met1 carries the post-translational modification N-acetylmethionine. Catalysis depends on residues Glu44, Asp109, and Asp111. 2 residues coordinate Mg(2+): Asp109 and Asp111. 2 residues coordinate Mn(2+): Asp109 and Asp111. 109 to 111 is an a ribonucleoside 5'-triphosphate binding site; the sequence is DID. Zn(2+)-binding residues include Cys121, Cys122, Cys128, and Cys131. The Zinc knuckle motif motif lies at 121–131; sequence CCSSADICPKC. 160–166 contributes to the a ribonucleoside 5'-triphosphate binding site; it reads SGRRGVH. Asp306 contacts Mg(2+). Asp306 is a Mn(2+) binding site. Residues 315 to 318 and His324 contribute to the a ribonucleoside 5'-triphosphate site; that span reads HLLK. The span at 363-373 shows a compositional bias: acidic residues; it reads NEEEKEENEAE. Residues 363-382 form a disordered region; the sequence is NEEEKEENEAESDVKHRTRD.

This sequence belongs to the eukaryotic-type primase small subunit family. Heterodimer of a catalytic subunit PRIM1 and a regulatory subunit PRIM2, also known as the DNA primase complex. Interacts with PRIM2 (via C-terminus). Component of the alpha DNA polymerase complex (also known as the alpha DNA polymerase-primase complex) consisting of four subunits: the catalytic subunit POLA1, the regulatory subunit POLA2, and the primase complex subunits PRIM1 and PRIM2 respectively. Within the complex, POLA1 directly interacts with PRIM2. The cofactor is Mg(2+). Requires Mn(2+) as cofactor.

It carries out the reaction ssDNA + n NTP = ssDNA/pppN(pN)n-1 hybrid + (n-1) diphosphate.. The presence of the regulatory subunit PRIM2/p58 accelerates the kinetics of initiation and primer extension. Inhibited by arabinose nucleoside derivatives such as fludarabine and vidarabine. Its function is as follows. Catalytic subunit of the DNA primase complex and component of the DNA polymerase alpha complex (also known as the alpha DNA polymerase-primase complex - primosome/replisome) which play an essential role in the initiation of DNA synthesis. During the S phase of the cell cycle, the DNA polymerase alpha complex (composed of a catalytic subunit POLA1, an accessory subunit POLA2 and two primase subunits, the catalytic subunit PRIM1 and the regulatory subunit PRIM2) is recruited to DNA at the replicative forks via direct interactions with MCM10 and WDHD1. The primase subunit of the polymerase alpha complex initiates DNA synthesis by oligomerising short RNA primers on both leading and lagging strands. These primers are initially extended by the polymerase alpha catalytic subunit and subsequently transferred to polymerase delta and polymerase epsilon for processive synthesis on the lagging and leading strand, respectively. In the primase complex, both subunits are necessary for the initial di-nucleotide formation, but the extension of the primer depends only on the catalytic subunit. Synthesizes 9-mer RNA primers (also known as the 'unit length' RNA primers). Incorporates only ribonucleotides in the presence of ribo- and deoxy-nucleotide triphosphates (rNTPs, dNTPs). Requires template thymine or cytidine to start the RNA primer synthesis, with an adenine or guanine at its 5'-end. Binds single stranded DNA. The chain is DNA primase small subunit (PRIM1) from Homo sapiens (Human).